The following is a 377-amino-acid chain: Pseudouridylate synthase RPUSD4, mitochondrial (377 aa).

A mitochondrion-targeting transit peptide spans 1–35; that stretch reads MAAPLLGSPGLQVLSMSSRTGKLFTPSSRSFCSRA. Asp-153 is a catalytic residue.

It belongs to the pseudouridine synthase RluA family. Interacts with 16S mt-rRNA, mt-tRNA(Phe) and mt-tRNA(Met). Forms a regulatory protein-RNA complex, consisting of RCC1L, NGRN, RPUSD3, RPUSD4, TRUB2, FASTKD2 and 16S mt-rRNA.

It localises to the mitochondrion matrix. Its subcellular location is the nucleus. It is found in the cytoplasm. The catalysed reaction is uridine in 5S rRNA = pseudouridine in 5S rRNA. It catalyses the reaction a uridine in tRNA = a pseudouridine in tRNA. It carries out the reaction a uridine in mRNA = a pseudouridine in mRNA. In terms of biological role, catalyzes uridine to pseudouridine isomerization (pseudouridylation) of different mitochondrial RNA substrates. Acts on position 1397 in 16S mitochondrial ribosomal RNA (16S mt-rRNA). This modification is required for the assembly of 16S mt-rRNA into a functional mitochondrial ribosome. As a component of a functional protein-RNA module, consisting of RCC1L, NGRN, RPUSD3, RPUSD4, TRUB2, FASTKD2 and 16S mt-rRNA, controls 16S mt-rRNA abundance and is required for intra-mitochondrial translation. Acts on position 39 in mitochondrial tRNA(Phe). Also catalyzes pseudouridylation of mRNAs in nucleus: acts as a regulator of pre-mRNA splicing by mediating pseudouridylation of pre-mRNAs at locations associated with alternatively spliced regions. Pseudouridylation of pre-mRNAs near splice sites directly regulates mRNA splicing and mRNA 3'-end processing. The protein is Pseudouridylate synthase RPUSD4, mitochondrial of Rattus norvegicus (Rat).